Here is an 84-residue protein sequence, read N- to C-terminus: Dolichol phosphate-mannose biosynthesis regulatory protein (84 aa).

The next 2 helical transmembrane spans lie at 11-31 and 49-69; these read FGLV…VILL and YAVL…GLFI.

This sequence belongs to the DPM2 family. As to quaternary structure, component of the dolichol-phosphate mannose (DPM) synthase complex composed of DPM1, DPM2 and DPM3; in the complex interacts directly with DPM3. Component of the glycosylphosphatidylinositol-N-acetylglucosaminyltransferase (GPI-GnT) complex composed at least by PIGA, PIGC, PIGH, PIGP, PIGQ, PIGY and DPM2. Interacts with PIGA, PIGC and PIGQ.

Its subcellular location is the endoplasmic reticulum membrane. It participates in protein modification; protein glycosylation. Its function is as follows. Regulates the biosynthesis of dolichol phosphate-mannose. Regulatory subunit of the dolichol-phosphate mannose (DPM) synthase complex; essential for the ER localization and stable expression of DPM1. Part of the glycosylphosphatidylinositol-N-acetylglucosaminyltransferase (GPI-GnT) complex that catalyzes the transfer of N-acetylglucosamine from UDP-N-acetylglucosamine to phosphatidylinositol and participates in the first step of GPI biosynthesis. May act by regulating the GPI-GNT complex. In Rattus norvegicus (Rat), this protein is Dolichol phosphate-mannose biosynthesis regulatory protein.